The primary structure comprises 103 residues: Protein reprimo A (103 aa).

A helical membrane pass occupies residues Ile50–Leu70.

This sequence belongs to the reprimo family.

It localises to the cytoplasm. Its subcellular location is the membrane. May be involved in the regulation of p53-dependent G2 arrest of the cell cycle. This is Protein reprimo A from Danio rerio (Zebrafish).